The chain runs to 347 residues: Phenylalanine--tRNA ligase alpha subunit (347 aa).

Position 261 (glutamate 261) interacts with Mg(2+).

Belongs to the class-II aminoacyl-tRNA synthetase family. Phe-tRNA synthetase alpha subunit type 1 subfamily. As to quaternary structure, tetramer of two alpha and two beta subunits. It depends on Mg(2+) as a cofactor.

It is found in the cytoplasm. The catalysed reaction is tRNA(Phe) + L-phenylalanine + ATP = L-phenylalanyl-tRNA(Phe) + AMP + diphosphate + H(+). The protein is Phenylalanine--tRNA ligase alpha subunit of Streptococcus equi subsp. zooepidemicus (strain MGCS10565).